We begin with the raw amino-acid sequence, 37 residues long: Brevinin-2DYe (37 aa).

A disulfide bridge connects residues Cys-31 and Cys-37.

In terms of tissue distribution, expressed by the skin glands.

It is found in the secreted. Functionally, antimicrobial peptide. Active against the Gram-positive bacterium S.aureus (MIC=15 uM) and the Gram-negative bacterium E.coli (MIC=30 uM). This chain is Brevinin-2DYe, found in Rana dybowskii (Dybovsky's frog).